An 89-amino-acid polypeptide reads, in one-letter code: Putative regulatory protein CPE1749 (89 aa).

This sequence belongs to the RemA family.

This is Putative regulatory protein CPE1749 from Clostridium perfringens (strain 13 / Type A).